Here is a 131-residue protein sequence, read N- to C-terminus: Aspartate 1-decarboxylase (131 aa).

S25 serves as the catalytic Schiff-base intermediate with substrate; via pyruvic acid. The residue at position 25 (S25) is a Pyruvic acid (Ser). Residue T57 coordinates substrate. Residue Y58 is the Proton donor of the active site. 73-75 (GAA) provides a ligand contact to substrate. A disordered region spans residues 112-131 (NVPTTQKSENPGQGSLRNAI). A compositionally biased stretch (polar residues) spans 113–131 (VPTTQKSENPGQGSLRNAI).

It belongs to the PanD family. As to quaternary structure, heterooctamer of four alpha and four beta subunits. Pyruvate serves as cofactor. Post-translationally, is synthesized initially as an inactive proenzyme, which is activated by self-cleavage at a specific serine bond to produce a beta-subunit with a hydroxyl group at its C-terminus and an alpha-subunit with a pyruvoyl group at its N-terminus.

Its subcellular location is the cytoplasm. It carries out the reaction L-aspartate + H(+) = beta-alanine + CO2. It functions in the pathway cofactor biosynthesis; (R)-pantothenate biosynthesis; beta-alanine from L-aspartate: step 1/1. Its function is as follows. Catalyzes the pyruvoyl-dependent decarboxylation of aspartate to produce beta-alanine. This is Aspartate 1-decarboxylase from Syntrophotalea carbinolica (strain DSM 2380 / NBRC 103641 / GraBd1) (Pelobacter carbinolicus).